The chain runs to 485 residues: Phosphoglucosamine mutase (485 aa).

The active-site Phosphoserine intermediate is the serine 133. Residues serine 133, aspartate 274, aspartate 276, and aspartate 278 each contribute to the Mg(2+) site. Position 133 is a phosphoserine (serine 133).

The protein belongs to the phosphohexose mutase family. The cofactor is Mg(2+). In terms of processing, activated by phosphorylation.

The enzyme catalyses alpha-D-glucosamine 1-phosphate = D-glucosamine 6-phosphate. Functionally, catalyzes the conversion of glucosamine-6-phosphate to glucosamine-1-phosphate. The polypeptide is Phosphoglucosamine mutase (Crocosphaera subtropica (strain ATCC 51142 / BH68) (Cyanothece sp. (strain ATCC 51142))).